A 393-amino-acid chain; its full sequence is UDP-galactose translocator (393 aa).

The next 10 membrane-spanning stretches (helical) occupy residues 3–23, 37–57, 65–85, 97–117, 140–160, 169–189, 200–220, 238–258, 269–289, and 315–335; these read AVGS…AGAL, YISL…IRYA, FFAT…CLLL, LVLF…KLAV, TFQV…VLML, WASL…QAGG, GVGL…GVYF, LGLF…GTAV, PAVW…AVVV, and LFGF…IGAV. Positions 353–393 are disordered; the sequence is APTSGPCTHQQPPGQPPPPQLSSHHGDLSTEPFLPKSVLVK.

This sequence belongs to the nucleotide-sugar transporter family. SLC35A subfamily. In terms of assembly, interacts with SLC35A3; the interaction is reduced in the presence of SLC35A4. Found in a complex with SLC35A3 and SLC35A4.

Its subcellular location is the golgi apparatus membrane. It catalyses the reaction UMP(out) + UDP-alpha-D-galactose(in) = UMP(in) + UDP-alpha-D-galactose(out). It carries out the reaction UDP-N-acetyl-alpha-D-galactosamine(in) + UMP(out) = UDP-N-acetyl-alpha-D-galactosamine(out) + UMP(in). The enzyme catalyses UMP(out) + UDP-alpha-D-glucose(in) = UMP(in) + UDP-alpha-D-glucose(out). The catalysed reaction is UMP(out) + UDP-N-acetyl-alpha-D-glucosamine(in) = UMP(in) + UDP-N-acetyl-alpha-D-glucosamine(out). It catalyses the reaction UDP-alpha-D-galactose(in) + AMP(out) = UDP-alpha-D-galactose(out) + AMP(in). It carries out the reaction UDP-alpha-D-galactose(in) + CMP(out) = UDP-alpha-D-galactose(out) + CMP(in). The enzyme catalyses UDP-N-acetyl-alpha-D-galactosamine(out) + UDP-alpha-D-galactose(in) = UDP-N-acetyl-alpha-D-galactosamine(in) + UDP-alpha-D-galactose(out). The catalysed reaction is UDP-N-acetyl-alpha-D-glucosamine(out) + UDP-alpha-D-galactose(in) = UDP-N-acetyl-alpha-D-glucosamine(in) + UDP-alpha-D-galactose(out). It catalyses the reaction UDP-alpha-D-galactose(in) + UDP-alpha-D-glucose(out) = UDP-alpha-D-galactose(out) + UDP-alpha-D-glucose(in). It carries out the reaction UMP(out) + CMP(in) = UMP(in) + CMP(out). The enzyme catalyses UMP(out) + AMP(in) = UMP(in) + AMP(out). Transports uridine diphosphate galactose (UDP-galactose) from the cytosol into the Golgi apparatus, functioning as an antiporter that exchanges UDP-galactose for UMP. It is also able to exchange UDP-galactose for AMP and CMP, and to transport UDP-N-acetylgalactosamine (UDP-GalNAc) and other nucleotide sugars. As a provider of UDP-galactose to galactosyltransferases present in the Golgi apparatus, it is necessary for globotriaosylceramide/globoside (Gb3Cer) synthesis from lactosylceramide. This is UDP-galactose translocator from Bos taurus (Bovine).